The following is a 239-amino-acid chain: C-8 sterol isomerase erg2 (239 aa).

Asn-11 carries N-linked (GlcNAc...) asparagine glycosylation. A helical transmembrane segment spans residues 27-47; the sequence is KFGFLAVFVAIFAALYSYLDA. A glycan (N-linked (GlcNAc...) asparagine) is linked at Asn-73.

Belongs to the ERG2 family.

The protein localises to the endoplasmic reticulum membrane. The catalysed reaction is fecosterol = episterol. It participates in steroid metabolism; ergosterol biosynthesis. Functionally, C-8 sterol isomerase; part of the third module of ergosterol biosynthesis pathway that includes the late steps of the pathway. Erg2 catalyzes the reaction which results in unsaturation at C-7 in the B ring of sterols and thus converts fecosterol to episterol. The third module or late pathway involves the ergosterol synthesis itself through consecutive reactions that mainly occur in the endoplasmic reticulum (ER) membrane. Firstly, the squalene synthase erg9 catalyzes the condensation of 2 farnesyl pyrophosphate moieties to form squalene, which is the precursor of all steroids. Squalene synthase is crucial for balancing the incorporation of farnesyl diphosphate (FPP) into sterol and nonsterol isoprene synthesis. Secondly, squalene is converted into lanosterol by the consecutive action of the squalene epoxidase erg1 and the lanosterol synthase erg7. Then, the delta(24)-sterol C-methyltransferase erg6 methylates lanosterol at C-24 to produce eburicol. Eburicol is the substrate of the sterol 14-alpha demethylase encoded by cyp51A and cyp51B, to yield 4,4,24-trimethyl ergosta-8,14,24(28)-trienol. The C-14 reductase erg24 then reduces the C14=C15 double bond which leads to 4,4-dimethylfecosterol. A sequence of further demethylations at C-4, involving the C-4 demethylation complex containing the C-4 methylsterol oxidases erg25A or erg25B, the sterol-4-alpha-carboxylate 3-dehydrogenase erg26 and the 3-keto-steroid reductase erg27, leads to the production of fecosterol via 4-methylfecosterol. The C-8 sterol isomerase erg2 then catalyzes the reaction which results in unsaturation at C-7 in the B ring of sterols and thus converts fecosterol to episterol. The sterol-C5-desaturase erg3B then catalyzes the introduction of a C-5 double bond in the B ring to produce 5-dehydroepisterol. The 2 other sterol-C5-desaturases, erg3A and erg3C, seem to be less important in ergosterol biosynthesis. The C-22 sterol desaturase erg5 further converts 5-dehydroepisterol into ergosta-5,7,22,24(28)-tetraen-3beta-ol by forming the C-22(23) double bond in the sterol side chain. Finally, ergosta-5,7,22,24(28)-tetraen-3beta-ol is substrate of the C-24(28) sterol reductases erg4A and erg4B to produce ergosterol. Possible alternative sterol biosynthetic pathways might exist from fecosterol to ergosterol, depending on the activities of the erg3 isoforms. This is C-8 sterol isomerase erg2 from Aspergillus fumigatus (strain ATCC MYA-4609 / CBS 101355 / FGSC A1100 / Af293) (Neosartorya fumigata).